Here is a 133-residue protein sequence, read N- to C-terminus: MSNLMKNFFTELVKSTTFTTKVSVVKTTLSNWLCEQVYPDKDFSLKLKRVVNMFLNNEIENNKIYKLVETVDSSNKLSRRQVDFLIHALLNNVSVTFTLHRFVDDNVLTQDELSFLANFLVTKMDEAYQLPAY.

Interacts with protein Ac76.

It localises to the virion. The protein resides in the host cytoplasm. The protein localises to the host nucleus. Functionally, plays a role in nuclear egress of nucleocapsids and intranuclear microvesicle formation. This Lepidoptera (butterflies and moths) protein is Protein Ac75 (Ac75).